Reading from the N-terminus, the 78-residue chain is Defensin-like protein 74 (78 aa).

Positions 1 to 28 are cleaved as a signal peptide; the sequence is MNYKIGIMSLLVITSIIFLFLVPDKVEA. 4 disulfide bridges follow: Cys-32-Cys-73, Cys-36-Cys-58, Cys-42-Cys-71, and Cys-46-Cys-72.

This sequence belongs to the DEFL family.

The protein localises to the secreted. This Arabidopsis thaliana (Mouse-ear cress) protein is Defensin-like protein 74 (LCR43).